We begin with the raw amino-acid sequence, 176 residues long: Putative ribosomal protein eS10-like (176 aa).

Residues 104 to 176 (TLHRSRPETG…CGRGRGQPPQ (73 aa)) form a disordered region. Residues 108–139 (SRPETGRPRPKGLEGKRPARLTRREADRDTYR) show a composition bias toward basic and acidic residues.

This sequence belongs to the eukaryotic ribosomal protein eS10 family.

The chain is Putative ribosomal protein eS10-like (RPS10P5) from Homo sapiens (Human).